The primary structure comprises 286 residues: Structural protein p32K (286 aa).

The propeptide at 1–12 (MYVTNNTALAGG) is removed in mature form. A disordered region spans residues 1 to 41 (MYVTNNTALAGGAYRKRKKKFQRPKPRKRARKSKKPPKSEN). Residues 14-36 (YRKRKKKFQRPKPRKRARKSKKP) show a composition bias toward basic residues.

This sequence belongs to the atadenoviridae p32K protein family.

It localises to the virion. This Ovine adenovirus D serotype 7 (isolate OAV287) (OAdV-7) protein is Structural protein p32K.